The sequence spans 123 residues: MARIAGIDLPRDKRIVIGLTYIYGIGNTTAQKILAEAGVSEDVRVRDLSADQEDAIRATVDKLNLQLEGDLRRKVSLDIKSLQEIASYRGIRHRKGLPVRGQNTKNNARTRKGPAKAIAGKKK.

A disordered region spans residues 93 to 123 (HRKGLPVRGQNTKNNARTRKGPAKAIAGKKK). Over residues 108-123 (ARTRKGPAKAIAGKKK) the composition is skewed to basic residues.

This sequence belongs to the universal ribosomal protein uS13 family. Part of the 30S ribosomal subunit. Forms a loose heterodimer with protein S19. Forms two bridges to the 50S subunit in the 70S ribosome.

In terms of biological role, located at the top of the head of the 30S subunit, it contacts several helices of the 16S rRNA. In the 70S ribosome it contacts the 23S rRNA (bridge B1a) and protein L5 of the 50S subunit (bridge B1b), connecting the 2 subunits; these bridges are implicated in subunit movement. Contacts the tRNAs in the A and P-sites. This is Small ribosomal subunit protein uS13 from Leuconostoc citreum (strain KM20).